Consider the following 236-residue polypeptide: Ribose-5-phosphate isomerase A (236 aa).

Substrate is bound by residues serine 29–threonine 32, aspartate 86–aspartate 89, and lysine 99–glycine 102. Glutamate 108 acts as the Proton acceptor in catalysis. Lysine 126 provides a ligand contact to substrate.

Belongs to the ribose 5-phosphate isomerase family. Homodimer.

It carries out the reaction aldehydo-D-ribose 5-phosphate = D-ribulose 5-phosphate. It functions in the pathway carbohydrate degradation; pentose phosphate pathway; D-ribose 5-phosphate from D-ribulose 5-phosphate (non-oxidative stage): step 1/1. In terms of biological role, catalyzes the reversible conversion of ribose-5-phosphate to ribulose 5-phosphate. This Prochlorococcus marinus (strain NATL1A) protein is Ribose-5-phosphate isomerase A.